Here is a 216-residue protein sequence, read N- to C-terminus: Urease operon 23 kDa accessory protein (216 aa).

Its function is as follows. Involved in the expression of hydrogenase activity. May be a regulatory gene affecting the expression of the hydrogenase operon or could be involved in the process of nickel incorporation into the hydrogenase apoenzyme. The sequence is that of Urease operon 23 kDa accessory protein from Rhizobium meliloti (strain 1021) (Ensifer meliloti).